The chain runs to 549 residues: Cytochrome c oxidase subunit 1 homolog, bacteroid (549 aa).

3 consecutive transmembrane segments (helical) span residues 12 to 32, 39 to 59, and 87 to 107; these read IGES…VIAA, PFAF…FCIV, and FSSF…LIIA. Residue histidine 131 coordinates heme b. The next 8 membrane-spanning stretches (helical) occupy residues 132-152, 168-188, 201-221, 228-248, 279-299, 312-332, 344-364, and 382-402; these read TSAV…FYVV, FVVV…LLGV, ADLW…ATII, IFVA…LHLG, GHNA…YYFI, LSII…PHHL, LGMT…INGL, and MLVV…MMSI. 3 residues coordinate Cu cation: histidine 280, histidine 330, and histidine 331. Residues histidine 418 and histidine 420 each contribute to the heme b site. 3 helical membrane-spanning segments follow: residues 423-443, 458-478, and 512-532; these read ALGW…PWAW, FWVA…SGIL, and AGGG…WMTV.

It belongs to the heme-copper respiratory oxidase family. Cu(2+) serves as cofactor. The cofactor is heme b.

The protein resides in the cell membrane. The catalysed reaction is 4 Fe(II)-[cytochrome c] + O2 + 8 H(+)(in) = 4 Fe(III)-[cytochrome c] + 2 H2O + 4 H(+)(out). It functions in the pathway energy metabolism; oxidative phosphorylation. In terms of biological role, cytochrome c oxidase is the component of the respiratory chain that catalyzes the reduction of oxygen to water. Subunits 1-3 form the functional core of the enzyme complex. Co I is the catalytic subunit of the enzyme. Electrons originating in cytochrome c or a quinol are transferred to the bimetallic center formed by a high-spin heme and copper B. This Bradyrhizobium diazoefficiens (strain JCM 10833 / BCRC 13528 / IAM 13628 / NBRC 14792 / USDA 110) protein is Cytochrome c oxidase subunit 1 homolog, bacteroid (fixN).